Reading from the N-terminus, the 352-residue chain is Endophilin-A1 (352 aa).

Positions 1–21 are membrane-binding amphipathic helix; it reads MSVAGLKKQFHKATQKVSEKV. The disordered stretch occupies residues 1–27; the sequence is MSVAGLKKQFHKATQKVSEKVGGAEGT. Residues 1–125 are binds and tubulates liposomes; that stretch reads MSVAGLKKQF…EVGEAMRELS (125 aa). The region spanning 18 to 249 is the BAR domain; that stretch reads SEKVGGAEGT…LEERIRQASS (232 aa). The required for dimerization upon membrane association stretch occupies residues 60 to 87; it reads PNPASRAKLSMINTMSKIRGQEKGPGYP. Residues 181 to 248 adopt a coiled-coil conformation; it reads EELRQALEKF…RLEERIRQAS (68 aa). S262 bears the Phosphoserine mark. The tract at residues 264-289 is disordered; that stretch reads EFATGDSTQPNGGLSHTGTPKPPGVQ. The segment covering 268–281 has biased composition (polar residues); the sequence is GDSTQPNGGLSHTG. Positions 290–349 constitute an SH3 domain; it reads MDQPCCRALYDFEPENEGELGFKEGDIITLTNQIDENWYEGMLHGQSGFFPINYVEILVA. Y299 carries the phosphotyrosine modification.

The protein belongs to the endophilin family. In terms of assembly, monomer; in cytoplasm. Homodimer; when associated with membranes. Interacts with SYNJ1. Interacts with DNM1. Interacts with MAP4K3; the interaction appears to regulate MAP4K3-mediated JNK activation. Interacts with OPHN1. Interacts with PDCD6IP. Interacts with BIN2. Interacts with ATXN2. Interacts with ADAM9 and ADAM15 cytoplasmic tails. Interacts with TMEM108. Interacts with ADGRB2.

It is found in the cytoplasm. The protein resides in the membrane. It localises to the early endosome. Its subcellular location is the presynapse. Functionally, implicated in synaptic vesicle endocytosis. May recruit other proteins to membranes with high curvature. Required for BDNF-dependent dendrite outgrowth. Cooperates with SH3GL2 to mediate BDNF-NTRK2 early endocytic trafficking and signaling from early endosomes. The sequence is that of Endophilin-A1 (Sh3gl2) from Mus musculus (Mouse).